We begin with the raw amino-acid sequence, 1383 residues long: NPC intracellular cholesterol transporter 1 homolog 1 (1383 aa).

An N-terminal signal peptide occupies residues 1–20; it reads MKQLLIFCLLFGSIFHHGDA. Cystine bridges form between Cys-22/Cys-76, Cys-28/Cys-39, Cys-65/Cys-111, Cys-77/Cys-115, Cys-99/Cys-246, Cys-102/Cys-167, Cys-182/Cys-187, and Cys-235/Cys-251. Asn-42 carries an N-linked (GlcNAc...) asparagine glycan. Asn-231 carries an N-linked (GlcNAc...) asparagine glycan. Helical transmembrane passes span 282-302 and 353-373; these read IFVM…GFVF and PKSH…GMIY. Asn-447 carries an N-linked (GlcNAc...) asparagine glycan. 2 cysteine pairs are disulfide-bonded: Cys-464/Cys-474 and Cys-526/Cys-541. N-linked (GlcNAc...) asparagine glycosylation is present at Asn-558. 6 consecutive transmembrane segments (helical) span residues 627-647, 665-685, 697-717, 746-766, 780-800, and 856-876; these read EIVT…FSLG, ICLG…SWGI, ALVV…FMVV, TMPA…IGGF, GLAV…LFVW, and IITG…SSKI. Residues 627–800 enclose the SSD domain; it reads EIVTVVIALA…CTIFLALFVW (174 aa). Disulfide bonds link Cys-929-Cys-934, Cys-976-Cys-1046, Cys-977-Cys-1005, and Cys-988-Cys-1002. 2 N-linked (GlcNAc...) asparagine glycosylation sites follow: Asn-993 and Asn-1082. 5 consecutive transmembrane segments (helical) span residues 1126 to 1146, 1157 to 1177, 1179 to 1199, 1226 to 1246, and 1260 to 1280; these read IMPI…GIIC, ACAV…MYIF, IPVN…LIEF, IGPI…MFLS, and LFLI…PILL.

Belongs to the patched family.

The protein localises to the membrane. The enzyme catalyses cholesterol(in) = cholesterol(out). Its function is as follows. Involved in the uptake or utilization of cholesterol. Ncr-1 and ncr-2 act redundantly to prevent dauer larva formation under favorable growth conditions, and are required for the normal functioning of ADF, ASI and ASG neurons. The polypeptide is NPC intracellular cholesterol transporter 1 homolog 1 (Caenorhabditis elegans).